The following is a 94-amino-acid chain: Co-chaperonin GroES (94 aa).

The interval 17–53 is disordered; it reads DSNPNSPIQLPDSAKKKPTKGKVVSVGPGASNSDGKV.

It belongs to the GroES chaperonin family. In terms of assembly, heptamer of 7 subunits arranged in a ring. Interacts with the chaperonin GroEL.

The protein localises to the cytoplasm. Functionally, together with the chaperonin GroEL, plays an essential role in assisting protein folding. The GroEL-GroES system forms a nano-cage that allows encapsulation of the non-native substrate proteins and provides a physical environment optimized to promote and accelerate protein folding. GroES binds to the apical surface of the GroEL ring, thereby capping the opening of the GroEL channel. The chain is Co-chaperonin GroES from Anaplasma phagocytophilum (strain HZ).